A 685-amino-acid polypeptide reads, in one-letter code: E3 ubiquitin ligase Rnf157 (685 aa).

A lipid anchor (N-myristoyl glycine) is attached at Gly-2. Residues 276-315 (ECVVCLSDVRDTLILPCRHLCLCNTCADTLRYQANNCPIC) form an RING-type zinc finger. Positions 329-332 (RKKL) match the D-box 1 motif. Disordered regions lie at residues 339–361 (SFNP…ENIP), 433–584 (LSKS…AGEQ), and 650–672 (LGGR…EASA). The segment covering 434–443 (SKSISQNSSV) has biased composition (low complexity). The span at 478 to 537 (ESENLTLSSSGAVDQSSCTGTPLSSTISSPEDPASSSLAQSVMSMASSQISTDTVSSMSG) shows a compositional bias: polar residues. A compositionally biased stretch (low complexity) spans 552-561 (PSPRAASRAP). Residues 657–660 (ARPR) carry the D-box 2 motif.

As to quaternary structure, interacts with APBB1. Interacts with CHD1; CHD1-binding controls RNF157 stability. Also interacts with ATRN, MEGF8, TECR, MSI2, PLRG1, BYSL, MTERF3, PSMA1, MRPS18B, PRPF4, FASTKD2, SLC25A1, SMU1, CNOT9, MRPS2, MAGT1, FXR2, EMD, PSMD8, HDAC1, RAN, HSD17B12, TXNDC5 and MRPL19.

It localises to the cytoplasm. The catalysed reaction is S-ubiquitinyl-[E2 ubiquitin-conjugating enzyme]-L-cysteine + [acceptor protein]-L-lysine = [E2 ubiquitin-conjugating enzyme]-L-cysteine + N(6)-ubiquitinyl-[acceptor protein]-L-lysine.. Its function is as follows. E3 ubiquitin ligase that ubiquitinates APBB1 for its degradation by the proteasome and thus prevents apoptosis and promotes survival of neurons. Has a dual role in neurons as it is also required for dendrite growth and maintenance for which its ligase activity is not critical. May act as a scaffold molecule to regulate this process. Acts as a downstream effector of the interconnected PI3K and MAPK signaling pathways and thus participates in the regulation of the cell cycle. This is E3 ubiquitin ligase Rnf157 (Rnf157) from Mus musculus (Mouse).